A 333-amino-acid polypeptide reads, in one-letter code: Arylacetonitrilase (333 aa).

One can recognise a CN hydrolase domain in the interval 9 to 284; it reads VRVAVTQAEP…EGIIYADLEM (276 aa). The active-site Proton acceptor is the Glu49. The active site involves Lys129. Cys164 (nucleophile) is an active-site residue.

The protein belongs to the carbon-nitrogen hydrolase superfamily. Nitrilase family.

It carries out the reaction a nitrile + 2 H2O = a carboxylate + NH4(+). The catalysed reaction is 4-chlorophenylacetonitrile + 2 H2O = 4-chlorophenylacetate + NH4(+). Functionally, nitrilase that hydrolyzes preferentially phenylacetonitrile, (R,S)-mandelonitrile, and 3-indolylacetonitrile. In Aspergillus oryzae (strain ATCC 42149 / RIB 40) (Yellow koji mold), this protein is Arylacetonitrilase.